The sequence spans 437 residues: MGLRAAPSSAAAAAAEVEQRRSPGLCPPPLELLLLLLFSLGLLHAGDCQQPAQCRIQKCTTDFVSLTSHLNSAVDGFDSEFCKALRAYAGCTQRTSKACRGNLVYHSAVLGISDLMSQRNCSKDGPTSSTNPEVTHDPCNYHSHAGAREHRRGDQNPPSYLFCGLFGDPHLRTFKDNFQTCKVEGAWPLIDNNYLSVQVTNVPVVPGSSATATNKITIIFKAHHECTDQKVYQAVTDDLPAAFVDGTTSGGDSDAKSLRIVERESGHYVEMHARYIGTTVFVRQVGRYLTLAIRMPEDLAMSYEESQDLQLCVNGCPLSERIDDGQGQVSAILGHSLPRTSLVQAWPGYTLETANTQCHEKMPVKDIYFQSCVFDLLTTGDANFTAAAHSALEDVEALHPRKERWHIFPSSGNGTPRGGSDLSVSLGLTCLILIVFL.

The first 45 residues, 1-45, serve as a signal peptide directing secretion; sequence MGLRAAPSSAAAAAAEVEQRRSPGLCPPPLELLLLLLFSLGLLHA. N-linked (GlcNAc...) asparagine glycosylation is present at Asn-120. The segment covering 121-133 has biased composition (polar residues); sequence CSKDGPTSSTNPE. Residues 121–153 are disordered; that stretch reads CSKDGPTSSTNPEVTHDPCNYHSHAGAREHRRG. Intrachain disulfides connect Cys-139/Cys-226 and Cys-163/Cys-312. An N-linked (GlcNAc...) asparagine glycan is attached at Asn-383. Asn-413 carries GPI-anchor amidated asparagine lipidation. Positions 414 to 437 are cleaved as a propeptide — removed in mature form; the sequence is GTPRGGSDLSVSLGLTCLILIVFL.

The protein belongs to the repulsive guidance molecule (RGM) family. In terms of assembly, homooligomer. Interacts with DRGX. Interacts with BMP2 and BMP4. Interacts with the BMP type I receptors ACVR1, BMPR1A and BMPR1B and with the BMP type II receptor ACVR2B. The functional complex with its receptor NEO1/neogenin appears to be a heterotetramer with a 2:2 stoichiometry, RGM molecules acting as staples that bring two NEO1 receptors together without interacting themselves, this arrangement leads to activation of downstream signaling via RhoA. GPI-anchored. Post-translationally, autocatalytically cleaved at low pH; the two chains remain linked via two disulfide bonds.

It is found in the cell membrane. Its subcellular location is the membrane raft. Functionally, member of the repulsive guidance molecule (RGM) family that contributes to the patterning of the developing nervous system. Acts as a bone morphogenetic protein (BMP) coreceptor that potentiates BMP signaling. Promotes neuronal adhesion. May inhibit neurite outgrowth. The protein is Repulsive guidance molecule B of Homo sapiens (Human).